The chain runs to 350 residues: Dihydroorotate dehydrogenase (quinone) (350 aa).

Residues 61-65 (AGLDK) and T85 each bind FMN. K65 provides a ligand contact to substrate. Position 110–114 (110–114 (NRMGF)) interacts with substrate. 2 residues coordinate FMN: N139 and N172. Residue N172 participates in substrate binding. S175 (nucleophile) is an active-site residue. N177 is a substrate binding site. Residues K217 and T245 each contribute to the FMN site. 246–247 (NT) is a binding site for substrate. FMN is bound by residues G268, G297, and 318-319 (YS).

Belongs to the dihydroorotate dehydrogenase family. Type 2 subfamily. As to quaternary structure, monomer. The cofactor is FMN.

The protein localises to the cell membrane. The catalysed reaction is (S)-dihydroorotate + a quinone = orotate + a quinol. Its pathway is pyrimidine metabolism; UMP biosynthesis via de novo pathway; orotate from (S)-dihydroorotate (quinone route): step 1/1. In terms of biological role, catalyzes the conversion of dihydroorotate to orotate with quinone as electron acceptor. This is Dihydroorotate dehydrogenase (quinone) from Flavobacterium lutescens.